The following is a 203-amino-acid chain: Phospho-2-dehydro-3-deoxyheptonate aldolase (203 aa).

Basic and acidic residues predominate over residues 1–10 (MIDRLVRDSR). A disordered region spans residues 1–28 (MIDRLVRDSRGPVTERNPPHMSLSAGPA).

It belongs to the class-I DAHP synthase family.

The enzyme catalyses D-erythrose 4-phosphate + phosphoenolpyruvate + H2O = 7-phospho-2-dehydro-3-deoxy-D-arabino-heptonate + phosphate. Its pathway is metabolic intermediate biosynthesis; chorismate biosynthesis; chorismate from D-erythrose 4-phosphate and phosphoenolpyruvate: step 1/7. Stereospecific condensation of phosphoenolpyruvate (PEP) and D-erythrose-4-phosphate (E4P) giving rise to 3-deoxy-D-arabino-heptulosonate-7-phosphate (DAHP). The protein is Phospho-2-dehydro-3-deoxyheptonate aldolase (aroA) of Amycolatopsis methanolica.